The following is a 97-amino-acid chain: Aspartyl/glutamyl-tRNA(Asn/Gln) amidotransferase subunit C (97 aa).

A compositionally biased stretch (low complexity) spans 74 to 84 (TPEEATAAAPA). The interval 74–97 (TPEEATAAAPAREGTAFKVPRIIE) is disordered.

This sequence belongs to the GatC family. Heterotrimer of A, B and C subunits.

It catalyses the reaction L-glutamyl-tRNA(Gln) + L-glutamine + ATP + H2O = L-glutaminyl-tRNA(Gln) + L-glutamate + ADP + phosphate + H(+). It carries out the reaction L-aspartyl-tRNA(Asn) + L-glutamine + ATP + H2O = L-asparaginyl-tRNA(Asn) + L-glutamate + ADP + phosphate + 2 H(+). Functionally, allows the formation of correctly charged Asn-tRNA(Asn) or Gln-tRNA(Gln) through the transamidation of misacylated Asp-tRNA(Asn) or Glu-tRNA(Gln) in organisms which lack either or both of asparaginyl-tRNA or glutaminyl-tRNA synthetases. The reaction takes place in the presence of glutamine and ATP through an activated phospho-Asp-tRNA(Asn) or phospho-Glu-tRNA(Gln). This is Aspartyl/glutamyl-tRNA(Asn/Gln) amidotransferase subunit C from Anaeromyxobacter dehalogenans (strain 2CP-1 / ATCC BAA-258).